The primary structure comprises 388 residues: Succinate--CoA ligase [ADP-forming] subunit beta (388 aa).

Positions 9–243 (KQLFHRYGIP…ESQLAPLEVR (235 aa)) constitute an ATP-grasp domain. ATP contacts are provided by residues lysine 45, 52 to 54 (GRG), glutamate 98, valine 101, and glutamate 106. Mg(2+)-binding residues include asparagine 198 and aspartate 212. Substrate contacts are provided by residues asparagine 263 and 320–322 (GIM).

It belongs to the succinate/malate CoA ligase beta subunit family. Heterotetramer of two alpha and two beta subunits. Requires Mg(2+) as cofactor.

It carries out the reaction succinate + ATP + CoA = succinyl-CoA + ADP + phosphate. The catalysed reaction is GTP + succinate + CoA = succinyl-CoA + GDP + phosphate. The protein operates within carbohydrate metabolism; tricarboxylic acid cycle; succinate from succinyl-CoA (ligase route): step 1/1. In terms of biological role, succinyl-CoA synthetase functions in the citric acid cycle (TCA), coupling the hydrolysis of succinyl-CoA to the synthesis of either ATP or GTP and thus represents the only step of substrate-level phosphorylation in the TCA. The beta subunit provides nucleotide specificity of the enzyme and binds the substrate succinate, while the binding sites for coenzyme A and phosphate are found in the alpha subunit. In Syntrophotalea carbinolica (strain DSM 2380 / NBRC 103641 / GraBd1) (Pelobacter carbinolicus), this protein is Succinate--CoA ligase [ADP-forming] subunit beta.